Consider the following 2457-residue polypeptide: Highly reducing polyketide synthase ACTTS3 (2457 aa).

Residues 5 to 435 (REPIAVIGSA…GTNAHVILES (431 aa)) form the Ketosynthase family 3 (KS3) domain. Residues Cys179, His316, and His356 each act as for beta-ketoacyl synthase activity in the active site. Residues 545-856 (RVLGIFTGQG…VMEAVLESSP (312 aa)) are malonyl-CoA:ACP transacylase (MAT) domain. Ser641 functions as the For malonyltransferase activity in the catalytic mechanism. The interval 938-1078 (HELLGRRTAD…GRIIIHLGSG (141 aa)) is N-terminal hotdog fold. The interval 938–1244 (HELLGRRTAD…LSLKSVAEPT (307 aa)) is dehydratase (DH) domain. The PKS/mFAS DH domain maps to 938–1246 (HELLGRRTAD…LKSVAEPTEE (309 aa)). His970 (proton acceptor; for dehydratase activity) is an active-site residue. A C-terminal hotdog fold region spans residues 1091–1246 (TDLSPVDLDR…LKSVAEPTEE (156 aa)). The active-site Proton donor; for dehydratase activity is the Asp1152. The methyltransferase (CMet) domain stretch occupies residues 1399–1587 (ETMNNCIARA…DVFYDFPDRS (189 aa)). Residues 2085–2281 (FLPDKTYLMI…SDRHIENHLR (197 aa)) are ketoreductase (KR) domain. The region spanning 2374-2451 (DVTTVFQQAF…EISIDATKKY (78 aa)) is the Carrier domain. Position 2411 is an O-(pantetheine 4'-phosphoryl)serine (Ser2411).

Requires pantetheine 4'-phosphate as cofactor.

It functions in the pathway mycotoxin biosynthesis. Highly reducing polyketide synthase; part of the gene clusters that mediate the biosynthesis of the host-selective toxins (HSTs) ACT-toxins responsible for brown spot of tangerine disease by the tangerine pathotype which affects tangerines and mandarins. ACT-toxins consist of three moieties, 9,10-epoxy-8-hydroxy-9-methyl-decatrienoic acid (EDA), valine and a polyketide. ACT-toxin I is toxic to both citrus and pear; toxin II the 5''-deoxy derivative of ACT-toxin I, is highly toxic to pear and slightly toxic to citrus. On cellular level, ACT-toxins affect plasma membrane of susceptible cells and cause a sudden increase in loss of K(+) after a few minutes of toxin treatment. The acyl-CoA ligase ACTT1, the hydrolase ACTT2, the enoyl-CoA hydratases ACTT3 and ACTT6, and the acyl-CoA synthetase ACTT5 are all involved in the biosynthesis of the AK-, AF- and ACT-toxin common 9,10-epoxy-8-hydroxy-9-methyl-decatrienoic acid (EDA) structural moiety. The exact role of each enzyme, and of additional enzymes identified within the AF-toxin clusters have still to be determined. On the other hand, ACTTS1 to ACTTS4 are specific to the tangerine pathotype. The function of ACTTS3 is to elongate the polyketide chain portion of ACT-toxin that is unique to this toxin. The enoyl-reductase ACTTS2 might complement the missing enoyl-reductase (ER) domain in ACTTS3 in the synthesis of the polyketide portion of ACT-toxin. The roles of the nonribosomal peptide synthetases-related proteins ACTTS1 and ACTTS4 have also still not been elucidated. This chain is Highly reducing polyketide synthase ACTTS3, found in Alternaria alternata (Alternaria rot fungus).